We begin with the raw amino-acid sequence, 439 residues long: Perilipin-3 (439 aa).

Residues Met-1–Glu-19 show a composition bias toward low complexity. Positions Met-1–Val-26 are disordered. Lys-66 is subject to N6-acetyllysine. Ser-92 carries the phosphoserine modification. Lys-123 is covalently cross-linked (Glycyl lysine isopeptide (Lys-Gly) (interchain with G-Cter in SUMO1)). Phosphoserine is present on Ser-131. Position 175 is a phosphothreonine (Thr-175). Ser-180 and Ser-184 each carry phosphoserine. Thr-221 is modified (phosphothreonine). A phosphoserine mark is found at Ser-222 and Ser-246. Coiled-coil stretches lie at residues Arg-254–Ser-282 and Ala-358–Met-381. The residue at position 256 (Tyr-256) is a Phosphotyrosine.

It belongs to the perilipin family. In terms of assembly, homooligomer. Interacts with M6PR (via the cytoplasmic domain). Interacts with IGF2R (via the cytoplasmic domain). Post-translationally, phosphorylation at Tyr-256 by isoform 1 of CHKA (CHKalpha2) promotes dissociation from lipid droplets: dissociation is followed by recruitment of autophagosome machinery to lipid droplets and subsequent lipid droplet lipolysis.

It localises to the lipid droplet. It is found in the endosome membrane. The protein resides in the cytoplasm. Its function is as follows. Structural component of lipid droplets, which is required for the formation and maintenance of lipid storage droplets. Required for the transport of mannose 6-phosphate receptors (MPR) from endosomes to the trans-Golgi network. The sequence is that of Perilipin-3 (PLIN3) from Sus scrofa (Pig).